We begin with the raw amino-acid sequence, 414 residues long: tRNA(Ile)-lysidine synthase (414 aa).

13–18 (SGGIDS) serves as a coordination point for ATP.

The protein belongs to the tRNA(Ile)-lysidine synthase family.

The protein localises to the cytoplasm. It carries out the reaction cytidine(34) in tRNA(Ile2) + L-lysine + ATP = lysidine(34) in tRNA(Ile2) + AMP + diphosphate + H(+). Functionally, ligates lysine onto the cytidine present at position 34 of the AUA codon-specific tRNA(Ile) that contains the anticodon CAU, in an ATP-dependent manner. Cytidine is converted to lysidine, thus changing the amino acid specificity of the tRNA from methionine to isoleucine. The protein is tRNA(Ile)-lysidine synthase of Thermotoga maritima (strain ATCC 43589 / DSM 3109 / JCM 10099 / NBRC 100826 / MSB8).